We begin with the raw amino-acid sequence, 626 residues long: Forkhead box protein O1 (626 aa).

A compositionally biased stretch (pro residues) spans 1–11; sequence MAEAPLPPPPG. Disordered regions lie at residues 1 to 57, 90 to 142, 218 to 319, and 484 to 519; these read MAEA…PAAG, DIRQ…SRRN, SSWW…MPEQ, and PTYG…MTHN. Low complexity-rich tracts occupy residues 37-48 and 101-133; these read NPSSSANSSPAP and QHPQ…AQQP. The fork-head DNA-binding region spans 144–238; it reads WGNLSYADLI…KNGKSPRRRA (95 aa). Positions 248–259 are enriched in basic residues; that stretch reads AKSRGRAAKKKA. The segment covering 262-277 has biased composition (low complexity); sequence QSSQDGSSDSPGSQFS. 2 stretches are compositionally biased toward polar residues: residues 298-310 and 484-494; these read RPRT…TISG and PTYGSQPTHNK.

Post-translationally, phosphorylated by AKT1; insulin-induced. IGF1 rapidly induces phosphorylation of Thr-28, Ser-240 and Ser-303. Phosphorylation of Ser-240 decreases DNA-binding activity and promotes the phosphorylation of Thr-28, and Ser-303, which leads to nuclear exclusion and loss of function. Phosphorylation of Ser-313 is independent of IGF1 and leads to reduced function.

It localises to the cytoplasm. Its subcellular location is the nucleus. Its function is as follows. Transcription factor that regulates metabolic homeostasis in response to oxidative stress. Binds to the consensus sequence 5'-TT[G/A]TTTTG-3' and the related Daf-16 family binding element (DBE) with consensus sequence 5'-TT[G/A]TTTAC-3'. Main regulator of redox balance and osteoblast numbers and controls bone mass. Orchestrates the endocrine function of the skeleton in regulating glucose metabolism. Also acts as a key regulator of chondrogenic commitment of skeletal progenitor cells in response to lipid availability: when lipids levels are low, translocates to the nucleus and promotes expression of sox9, which induces chondrogenic commitment and suppresses fatty acid oxidation. Acts synergistically with atf4 to suppress osteocalcin/bglap activity, increasing glucose levels and triggering glucose intolerance and insulin insensitivity. Also suppresses the transcriptional activity of runx2, an upstream activator of osteocalcin/bglap. May act as a positive regulator of apoptosis in cardiac smooth muscle cells as a result of its transcriptional activation of pro-apoptotic genes. The chain is Forkhead box protein O1 from Xenopus tropicalis (Western clawed frog).